A 632-amino-acid chain; its full sequence is POU domain, class 2, transcription factor 1 (632 aa).

Residues T157 and T163 each carry the phosphothreonine modification. Residues 167 to 241 (EEPSDLEELE…LLEKWLNDAE (75 aa)) form the POU-specific domain. S170 bears the Phosphoserine mark. Low complexity predominate over residues 243–258 (LSSDSTASSPSALNSP). The disordered stretch occupies residues 243 to 273 (LSSDSTASSPSALNSPGLGAEGLNRRRKKRT). The segment at residues 268–327 (RRKKRTSIETNIRVALEKSFMENQKPTSEDITLIAEQLNMEKEVIRVWFCNRRQKEKRIN) is a DNA-binding region (homeobox). A phosphoserine mark is found at S274 and S337. The interval 385–448 (GTTDSTSNNT…STPLPSPLGA (64 aa)) is disordered. Residues 394 to 441 (TATVISTAPPASSAVTSPSLSPSPSASASTSEASSASETSTTQTTSTP) show a composition bias toward low complexity.

It belongs to the POU transcription factor family. Class-2 subfamily. In terms of assembly, interacts with POU2AF1; the interaction increases POU2F1 transactivation activity. Interacts with NR3C1, AR, PGR and HCFC1. Post-translationally, phosphorylated by PRKDC. In terms of tissue distribution, widely expressed.

The protein localises to the nucleus. Its function is as follows. Transcription factor that binds to the octamer motif (5'-ATTTGCAT-3') and activates the promoters of the genes for some small nuclear RNAs (snRNA) and of genes such as those for histone H2B and immunoglobulins. Modulates transcription transactivation by NR3C1, AR and PGR. The protein is POU domain, class 2, transcription factor 1 (Pou2f1) of Rattus norvegicus (Rat).